The primary structure comprises 95 residues: Protein TusB (95 aa).

It belongs to the DsrH/TusB family. In terms of assembly, heterohexamer, formed by a dimer of trimers. The hexameric TusBCD complex contains 2 copies each of TusB, TusC and TusD. The TusBCD complex interacts with TusE.

The protein localises to the cytoplasm. In terms of biological role, part of a sulfur-relay system required for 2-thiolation of 5-methylaminomethyl-2-thiouridine (mnm(5)s(2)U) at tRNA wobble positions. This Cronobacter sakazakii (strain ATCC BAA-894) (Enterobacter sakazakii) protein is Protein TusB.